We begin with the raw amino-acid sequence, 472 residues long: Eukaryotic translation initiation factor 2 subunit 3, X-linked (472 aa).

Ala-2 bears the N-acetylalanine mark. At Ser-16 the chain carries Phosphoserine. The tr-type G domain occupies 39 to 248 (QATINIGTIG…IVKKIPVPPR (210 aa)). Residues 48–55 (GHVAHGKS) are G1. 51–56 (AHGKST) serves as a coordination point for GTP. Residues 76–80 (NITIK) form a G2 region. Residues 134-137 (DCPG) are G3. GTP contacts are provided by residues 190 to 193 (NKID) and 225 to 227 (SAQ). The interval 190–193 (NKID) is G4. The tract at residues 225–227 (SAQ) is G5. Positions 457–469 (GQIRRGVTIKPTV) are interacts with Cdc123.

It belongs to the TRAFAC class translation factor GTPase superfamily. Classic translation factor GTPase family. EIF2G subfamily. In terms of assembly, eukaryotic translation initiation factor 2 eIF2 is a heterotrimeric complex composed of an alpha (EIF2S1), a beta (EIF2S2) and a gamma (EIF2S3) chain. eIF2 is member of the 43S pre-initiation complex (43S PIC). Interacts (via C-terminus) with CDC123; the interaction is direct. In terms of tissue distribution, widely expressed. In the brain, high mRNA levels are observed in specific regions, including the habenula, anterodorsal thalamic nucleus, hippocampus, hypothalamus, and cerebellum. Also expressed in the embryonic brain. There is a differential expression between males and females, which is tissue-specific. Females tend to have higher expression levels than males in the brain (cortex, hippocampus and paraventricular nucleus, but not in the habenula), as well as in other tissues. The up-regulation observed in females at the mRNA level may be due to the presence of 2 active copies of the gene.

The protein localises to the cytoplasm. It localises to the cytosol. The enzyme catalyses GTP + H2O = GDP + phosphate + H(+). Member of the eIF2 complex that functions in the early steps of protein synthesis by forming a ternary complex with GTP and initiator tRNA. This complex binds to a 40S ribosomal subunit, followed by mRNA binding to form the 43S pre-initiation complex (43S PIC). Junction of the 60S ribosomal subunit to form the 80S initiation complex is preceded by hydrolysis of the GTP bound to eIF2 and release of an eIF2-GDP binary complex. In order for eIF2 to recycle and catalyze another round of initiation, the GDP bound to eIF2 must exchange with GTP by way of a reaction catalyzed by eIF-2B. Along with its paralog on chromosome Y, may contribute to spermatogenesis up to the round spermatid stage. The polypeptide is Eukaryotic translation initiation factor 2 subunit 3, X-linked (Eif2s3x) (Mus musculus (Mouse)).